The following is a 528-amino-acid chain: Membrane protein insertase YidC (528 aa).

A run of 5 helical transmembrane segments spans residues 13–33 (ILLA…FFIP), 336–356 (WGWA…PLTY), 406–426 (LPIL…LNAI), 446–466 (YFIL…ITPM), and 481–501 (PVIF…YWFV).

It belongs to the OXA1/ALB3/YidC family. Type 1 subfamily. As to quaternary structure, interacts with the Sec translocase complex via SecD. Specifically interacts with transmembrane segments of nascent integral membrane proteins during membrane integration.

The protein resides in the cell inner membrane. In terms of biological role, required for the insertion and/or proper folding and/or complex formation of integral membrane proteins into the membrane. Involved in integration of membrane proteins that insert both dependently and independently of the Sec translocase complex, as well as at least some lipoproteins. Aids folding of multispanning membrane proteins. This chain is Membrane protein insertase YidC, found in Campylobacter jejuni subsp. jejuni serotype O:2 (strain ATCC 700819 / NCTC 11168).